A 1606-amino-acid chain; its full sequence is MSEDSRGDSRAESAKDLEKQLRLRVCVLSELQKTERDYVGTLEFLVSAFLHRMNQCAASKVDKNVTEETVKMLFSNIEDILAVHKEFLKVVEECLHPEPNAQQEVGTCFLHFKDKFRIYDEYCSNHEKAQKLLLELNKIRTIRTFLLNCMLLGGRKNTDVPLEGYLVTPIQRICKYPLILKELLKRTPRKHSDYAAVMEALQAMKAVCSNINEAKRQMEKLEVLEEWQSHIEGWEGSNITDTCTEMLMCGVLLKISSGNIQERVFFLFDNLLVYCKRKHRRLKNSKASTDGHRYLFRGRINTEVMEVENVDDGTADFHSSGHIVVNGWKIHNTAKNKWFVCMAKTPEEKHEWFEAILKERERRKGLKLGMEQDTWVMISEQGEKLYKMMCRQGNLIKDRKRKLTTFPKCFLGSEFVSWLLEIGEIHRPEEGVHLGQALLENGIIHHVTDKHQFKPEQMLYRFRYDDGTFYPRNEMQDVISKGVRLYCRLHSLFTPVIRDKDYHLRTYKSVVMANKLIDWLIAQGDCRTREEAMIFGVGLCDNGFMHHVLEKSEFKDEPLLFRFFSDEEMEGSNMKHRLMKHDLKVVENVIAKSLLIKSNEGSYGFGLEDKNKVPIIKLVEKGSNAEMAGMEVGKKIFAINGDLVFMRPFNEVDCFLKSCLNSRKPLRVLVSTKPRETVKIPDSADGLGFQIRGFGPSVVHAVGRGTVAAAAGLHPGQCIIKVNGINVSKETHASVIAHVTACRKYRRPTKQDSIQWVYNSIESAQEDLQKSHSKPPGDEAGDAFDCKVEEVIDKFNTMAIIDGKKEHVSLTVDNVHLEYGVVYEYDSTAGIKCNVVEKMIEPKGFFSLTAKILEALAKSDEHFVQNCTSLNSLNEVIPTDLQSKFSALCSERIEHLCQRISSYKKFSRVLKNRAWPTFKQAKSKISPLHSSDFCPTNCHVNVMEVSYPKTSTSLGSAFGVQLDSRKHNSHDKENKSSEQGKLSPMVYIQHTITTMAAPSGLSLGQQDGHGLRYLLKEEDLETQDIYQKLLGKLQTALKEVEMCVCQIDDLLSSITYSPKLERKTSEGIIPTDSDNEKGERNSKRVCFNVAGDEQEDSGHDTISNRDSYSDCNSNRNSIASFTSICSSQCSSYFHSDEMDSGDELPLSVRISHDKQDKIHSCLEHLFSQVDSITNLLKGQAVVRAFDQTKYLTPGRGLQEFQQEMEPKLSCPKRLRLHIKQDPWNLPSSVRTLAQNIRKFVEEVKCRLLLALLEYSDSETQLRRDMVFCQTLVATVCAFSEQLMAALNQMFDNSKENEMETWEASRRWLDQIANAGVLFHFQSLLSPNLTDEQAMLEDTLVALFDLEKVSFYFKPSEEEPLVANVPLTYQAEGSRQALKVYFYIDSYHFEQLPQRLKNGGGFKIHPVLFAQALESMEGYYYRDNVSVEEFQAQINAASLEKVKQYNQKLRAFYLDKSNSPPNSTSKAAYVDKLMRPLNALDELYRLVASFIRSKRTAACANTACSASGVGLLSVSSELCNRLGACHIIMCSSGVHRCTLSVTLEQAIILARSHGLPPRYIMQATDVMRKQGARVQNTAKNLGVRDRTPQSAPRLYKLCEPPPPAGEE.

Residues 23–214 form the DH domain; the sequence is LRVCVLSELQ…KAVCSNINEA (192 aa). The 117-residue stretch at 245–361 folds into the PH domain; sequence EMLMCGVLLK…WFEAILKERE (117 aa). DEP domains lie at 390-464 and 491-566; these read CRQG…RFRY and SLFT…FFSD. PDZ domains are found at residues 592–671 and 677–754; these read KSLL…VLVS and TVKI…QDSI. A disordered region spans residues 1581–1606; it reads GVRDRTPQSAPRLYKLCEPPPPAGEE.

Interacts with RAC1. Isoform 1 is highly expressed in skeletal muscle, heart and placenta, absent from peripheral blood leukocytes. Isoform 2 is expressed in skeletal muscle, kidney, small intestine, and placenta. Isoform 3 is expressed in the heart.

In terms of biological role, functions as a RAC1 guanine nucleotide exchange factor (GEF), activating Rac proteins by exchanging bound GDP for free GTP. Its activity is synergistically activated by phosphatidylinositol 3,4,5-trisphosphate and the beta gamma subunits of heterotrimeric G protein. Mediates the activation of RAC1 in a PI3K-dependent manner. May be an important mediator of Rac signaling, acting directly downstream of both G protein-coupled receptors and phosphoinositide 3-kinase. This Homo sapiens (Human) protein is Phosphatidylinositol 3,4,5-trisphosphate-dependent Rac exchanger 2 protein.